We begin with the raw amino-acid sequence, 705 residues long: Putative membrane protein SCO6666 (705 aa).

The next 13 membrane-spanning stretches (helical) occupy residues 16-36, 144-164, 177-197, 201-221, 232-252, 280-300, 306-326, 360-380, 504-524, 528-548, 561-581, 615-635, and 636-656; these read VMLL…GVFG, LHGI…PLLG, NAEL…FGGL, GLPL…LFGF, IQVT…LMLV, LFSG…PSTF, LAVA…LPAL, VAVL…VTGM, ALTV…SVLL, TVAT…WVFQ, LGAL…GLAM, VVTC…TGGF, and SPIL…ATVV.

It belongs to the resistance-nodulation-cell division (RND) (TC 2.A.6) family. MmpL subfamily.

It is found in the cell membrane. The protein is Putative membrane protein SCO6666 of Streptomyces coelicolor (strain ATCC BAA-471 / A3(2) / M145).